Consider the following 453-residue polypeptide: Ethanolamine ammonia-lyase large subunit (453 aa).

Substrate-binding positions include 160 to 162 (RLQ) and asparagine 193. Adenosylcob(III)alamin-binding residues include proline 194 and glutamine 246. Glutamate 287 contacts substrate. Position 295 (serine 295) interacts with adenosylcob(III)alamin. Residue aspartate 362 participates in substrate binding. Methionine 401 is a binding site for adenosylcob(III)alamin.

It belongs to the EutB family. As to quaternary structure, the basic unit is a heterodimer which dimerizes to form tetramers. The heterotetramers trimerize; 6 large subunits form a core ring with 6 small subunits projecting outwards. It depends on adenosylcob(III)alamin as a cofactor.

The protein resides in the bacterial microcompartment. It carries out the reaction ethanolamine = acetaldehyde + NH4(+). It functions in the pathway amine and polyamine degradation; ethanolamine degradation. Catalyzes the deamination of various vicinal amino-alcohols to oxo compounds. Allows this organism to utilize ethanolamine as the sole source of nitrogen and carbon in the presence of vitamin B12. The sequence is that of Ethanolamine ammonia-lyase large subunit from Escherichia coli O157:H7.